The primary structure comprises 549 residues: Serine/threonine-protein phosphatase PPQ (549 aa).

A compositionally biased stretch (polar residues) spans 1–13; it reads MRRSPSRSNNNFA. Disordered regions lie at residues 1–50, 64–85, 133–158, and 189–219; these read MRRS…RSLP, YNTL…DNLL, TSST…NYSS, and SRVK…PKSS. 2 stretches are compositionally biased toward low complexity: residues 16–32 and 68–83; these read NCST…TTPS and ASAG…SNDN. The segment covering 205 to 217 has biased composition (polar residues); that stretch reads APSSPTSGIPNPK. Mn(2+) is bound by residues Asp-301, His-303, Asp-329, and Asn-361. His-362 serves as the catalytic Proton donor. His-410 and His-485 together coordinate Mn(2+).

It belongs to the PPP phosphatase family. PP-Z subfamily. It depends on Mn(2+) as a cofactor.

The enzyme catalyses O-phospho-L-seryl-[protein] + H2O = L-seryl-[protein] + phosphate. The catalysed reaction is O-phospho-L-threonyl-[protein] + H2O = L-threonyl-[protein] + phosphate. Phosphatase involved in the regulation of protein synthesis. Affects translational accuracy. This Saccharomyces cerevisiae (strain ATCC 204508 / S288c) (Baker's yeast) protein is Serine/threonine-protein phosphatase PPQ (PPQ1).